Consider the following 611-residue polypeptide: Calmegin (611 aa).

The first 19 residues, 1–19 (MRFQGVGLCLGLLFITVNA), serve as a signal peptide directing secretion. Over 20–471 (DFMDDGVEVE…LVIAAEERPW (452 aa)) the chain is Lumenal. An N6-acetyllysine modification is found at Lys128. Cys151 and Cys185 are oxidised to a cystine. Residues 254-335 (LDDVVPPINP…KAEKPEDWSD (82 aa)) are disordered. The span at 265–284 (REIDDPSDKKPEEWDDRAKI) shows a compositional bias: basic and acidic residues. 8 consecutive repeat copies span residues 267-280 (IDDP…EWDD), 284-297 (IPDP…DWDE), 303-316 (IEDS…GWLD), 322-335 (IPNP…DWSD), 339-352 (GEWE…PACQ), 356-369 (GEWK…PKYK), 370-383 (GIWR…PNYQ), and 384-397 (GLWS…PDYF). The segment at 317–350 (DEPKFIPNPKAEKPEDWSDDMDGEWEAPHIPNPA) is interaction with PPIB. Residues Cys351 and Cys355 are joined by a disulfide bond. The helical transmembrane segment at 472–492 (LWLMYLVMAGLPVALVASFCW) threads the bilayer. The Cytoplasmic segment spans residues 493–611 (PRKVKKKYED…SLRKRRVRKD (119 aa)). Residues 517–611 (AALEQEAEEE…SLRKRRVRKD (95 aa)) form a disordered region. The segment covering 526–584 (EKAPEKPEDVQEEKKPGEAEVVTVEKEVIGEPEEKSKEDRETLEGQEEVSKLSKSGSED) has biased composition (basic and acidic residues). 7 positions are modified to phosphoserine: Ser561, Ser578, Ser580, Ser582, Ser592, Ser595, and Ser602. Positions 602-611 (SLRKRRVRKD) are enriched in basic residues.

It belongs to the calreticulin family. In terms of assembly, interacts with PDILT and PPIB. Interacts with ADAM2. Interacts with ADAM1A, ADAM1B and ADAM3; these are protein-coding genes in mouse but may be pseudogenes in other organisms. Detected in testis (at protein level). Detected in testis.

The protein resides in the endoplasmic reticulum membrane. Functions during spermatogenesis as a chaperone for a range of client proteins that are important for sperm adhesion onto the egg zona pellucida and for subsequent penetration of the zona pellucida. Required for normal sperm migration from the uterus into the oviduct. Required for normal male fertility. Binds calcium ions. The polypeptide is Calmegin (Clgn) (Mus musculus (Mouse)).